The following is a 251-amino-acid chain: uncharacterized protein (251 aa).

The protein resides in the mitochondrion. This is an uncharacterized protein from Arabidopsis thaliana (Mouse-ear cress).